The chain runs to 149 residues: Arginine regulator (149 aa).

It belongs to the ArgR family.

Its subcellular location is the cytoplasm. It participates in amino-acid degradation; L-arginine degradation via ADI pathway. In terms of biological role, regulates the transcription of the arc operon, involved in arginine catabolism. In Bacillus thuringiensis subsp. konkukian (strain 97-27), this protein is Arginine regulator (argR1).